The sequence spans 286 residues: ATP synthase gamma chain (286 aa).

The protein belongs to the ATPase gamma chain family. As to quaternary structure, F-type ATPases have 2 components, CF(1) - the catalytic core - and CF(0) - the membrane proton channel. CF(1) has five subunits: alpha(3), beta(3), gamma(1), delta(1), epsilon(1). CF(0) has three main subunits: a, b and c.

It localises to the cell inner membrane. Its function is as follows. Produces ATP from ADP in the presence of a proton gradient across the membrane. The gamma chain is believed to be important in regulating ATPase activity and the flow of protons through the CF(0) complex. The polypeptide is ATP synthase gamma chain (Shewanella loihica (strain ATCC BAA-1088 / PV-4)).